The chain runs to 200 residues: MAEPGLEGSQPVDLSKHPSGIVPTLQNIVSTVNLDCKLDLKAIALQARNAEYNPKRFAAVIMRIREPKTTALIFASGKMVCTGAKSEQQSKLAARKYARIIQKLGFPAKFKDFKIQNIVGSCDVKFPIRLEGLAYSHGAFSSYEPELFPGLIYRMKQPKIVLLIFVSGKIVLTGAKVREETYTAFENIYPVLSEFRKIQQ.

Repeat copies occupy residues 25–101 (LQNI…ARII) and 115–192 (IQNI…YPVL).

Belongs to the TBP family. Belongs to the TFIID complex together with the TBP-associated factors (TAFs). Binds DNA as monomer.

It localises to the nucleus. Functionally, general transcription factor that functions at the core of the DNA-binding multiprotein factor TFIID. Binding of TFIID to the TATA box is the initial transcriptional step of the pre-initiation complex (PIC), playing a role in the activation of eukaryotic genes transcribed by RNA polymerase II. The protein is TATA-box-binding protein 2 (TBP2) of Zea mays (Maize).